We begin with the raw amino-acid sequence, 281 residues long: Pantothenate synthetase (281 aa).

30–37 provides a ligand contact to ATP; it reads MGYLHEGH. His37 (proton donor) is an active-site residue. Gln61 contributes to the (R)-pantoate binding site. Residue Gln61 participates in beta-alanine binding. 147-150 provides a ligand contact to ATP; that stretch reads GEKD. Gln153 contributes to the (R)-pantoate binding site. Residues Ile176 and 184-187 each bind ATP; that span reads KSSR.

It belongs to the pantothenate synthetase family. As to quaternary structure, homodimer.

It localises to the cytoplasm. The catalysed reaction is (R)-pantoate + beta-alanine + ATP = (R)-pantothenate + AMP + diphosphate + H(+). It functions in the pathway cofactor biosynthesis; (R)-pantothenate biosynthesis; (R)-pantothenate from (R)-pantoate and beta-alanine: step 1/1. Its function is as follows. Catalyzes the condensation of pantoate with beta-alanine in an ATP-dependent reaction via a pantoyl-adenylate intermediate. This chain is Pantothenate synthetase, found in Clostridium botulinum (strain 657 / Type Ba4).